A 363-amino-acid chain; its full sequence is Cytochrome c oxidase subunit 2 (363 aa).

Positions methionine 1–glycine 23 are disordered. The N-terminal stretch at methionine 1–alanine 41 is a signal peptide. Transmembrane regions (helical) follow at residues leucine 71–phenylalanine 91 and leucine 118–valine 138. 4 residues coordinate Cu cation: histidine 254, cysteine 295, cysteine 299, and histidine 303.

The protein belongs to the cytochrome c oxidase subunit 2 family. It depends on Cu cation as a cofactor. Heme is required as a cofactor.

It localises to the cell membrane. The catalysed reaction is 4 Fe(II)-[cytochrome c] + O2 + 8 H(+)(in) = 4 Fe(III)-[cytochrome c] + 2 H2O + 4 H(+)(out). In terms of biological role, subunits I and II form the functional core of the enzyme complex. Electrons originating in cytochrome c are transferred via heme a and Cu(A) to the binuclear center formed by heme a3 and Cu(B). This Mycobacterium bovis (strain ATCC BAA-935 / AF2122/97) protein is Cytochrome c oxidase subunit 2 (ctaC).